The primary structure comprises 502 residues: UDP-N-acetylmuramoylalanine--D-glutamate ligase (502 aa).

129–135 (GTNGKTT) provides a ligand contact to ATP. Residues 288-307 (APDETTSRRRKRDGAHTPDI) are disordered.

It belongs to the MurCDEF family.

It is found in the cytoplasm. The enzyme catalyses UDP-N-acetyl-alpha-D-muramoyl-L-alanine + D-glutamate + ATP = UDP-N-acetyl-alpha-D-muramoyl-L-alanyl-D-glutamate + ADP + phosphate + H(+). It functions in the pathway cell wall biogenesis; peptidoglycan biosynthesis. Its function is as follows. Cell wall formation. Catalyzes the addition of glutamate to the nucleotide precursor UDP-N-acetylmuramoyl-L-alanine (UMA). The chain is UDP-N-acetylmuramoylalanine--D-glutamate ligase from Burkholderia ambifaria (strain ATCC BAA-244 / DSM 16087 / CCUG 44356 / LMG 19182 / AMMD) (Burkholderia cepacia (strain AMMD)).